A 399-amino-acid polypeptide reads, in one-letter code: MKLVVLVALWLWPSSLLAYPTITVLPDEEQNLNHYVHILQNLIMSVPTKEQDLGKKLSSSRTVDSAEPRSLASKVLLTPGLVSAQDVTPESDVLIRPVDETTNSRTRGFTLRRRRTQSTAFWSIRPNNISVVLRTEEPFIEKEPEPELESSRLPTEPEPELEPEPEPVAESRQMSEPEEELVTSTTPNKELTGTSRISSMATQPANTQATRITVTVKTTSTMDVSTDSEDVPQLSGQSEIPSAEDLPGRHSLNTRHEDILKKISNINAEIQQGLLGGNNSPEFKEFIKASREHLKRSLALAAAAEHKLEQMYGSNVFPEGRTSDPDNDMEMIINMLYNSRSKLSDYFNIKRVPSELREKASVVNAELRKILCVDQVEMQSLIKKLLSNNMKILNILNVP.

A signal peptide spans 1–18 (MKLVVLVALWLWPSSLLA). N-linked (GlcNAc...) asparagine glycosylation is present at Asn-128. A compositionally biased stretch (basic and acidic residues) spans 136-145 (EEPFIEKEPE). The tract at residues 136-250 (EEPFIEKEPE…PSAEDLPGRH (115 aa)) is disordered. A compositionally biased stretch (acidic residues) spans 157-167 (PEPELEPEPEP). The span at 182 to 206 (VTSTTPNKELTGTSRISSMATQPAN) shows a compositional bias: polar residues. Residues 207–225 (TQATRITVTVKTTSTMDVS) are compositionally biased toward low complexity.

Belongs to the SPESP1 family. Glycosylated. In testis there are two predominant forms of 77- and 67-kDa and a form of 47-kDa, whereas in epididymal sperm from caput, corpus, and cauda there are two forms of 47- and 43-kDa. Testis forms contain complex carbohydrate residues. Epididymal sperm forms are N-glycosylated. Then undergoes significant glycosylation in the testis and that the majority of these glycoconjugates are removed by the time sperm reach the caput epididymis. Testis specific.

The protein resides in the cytoplasmic vesicle. It localises to the secretory vesicle. It is found in the acrosome. Its function is as follows. Involved in fertilization ability of sperm. The protein is Sperm equatorial segment protein 1 of Mus musculus (Mouse).